The following is a 116-amino-acid chain: Small ribosomal subunit protein uS10m (116 aa).

It belongs to the universal ribosomal protein uS10 family.

The protein localises to the mitochondrion. The polypeptide is Small ribosomal subunit protein uS10m (RPS10) (Reclinomonas americana).